A 92-amino-acid chain; its full sequence is Small ribosomal subunit protein uS19c (92 aa).

Residues 73 to 92 (EFSPTRTYRGHAKKDKKAKR) are disordered. A compositionally biased stretch (basic residues) spans 80–92 (YRGHAKKDKKAKR).

It belongs to the universal ribosomal protein uS19 family.

It localises to the plastid. It is found in the chloroplast. In terms of biological role, protein S19 forms a complex with S13 that binds strongly to the 16S ribosomal RNA. The sequence is that of Small ribosomal subunit protein uS19c (rps19) from Chlamydomonas reinhardtii (Chlamydomonas smithii).